We begin with the raw amino-acid sequence, 489 residues long: Rhamnulokinase (489 aa).

13 to 17 (ASSGR) is a binding site for ATP. Residues Cys68 and Cys222 are joined by a disulfide bond. Residues Gly83 and 236 to 238 (HDT) contribute to the substrate site. Asp237 functions as the Proton acceptor in the catalytic mechanism. Thr259 lines the ATP pocket. A substrate-binding site is contributed by Asn296. Gln304 lines the ATP pocket. Cys353 and Cys370 are joined by a disulfide. Residue Gly402 participates in ATP binding. An intrachain disulfide couples Cys413 to Cys417.

It belongs to the rhamnulokinase family. Mg(2+) is required as a cofactor.

It carries out the reaction L-rhamnulose + ATP = L-rhamnulose 1-phosphate + ADP + H(+). It participates in carbohydrate degradation; L-rhamnose degradation; glycerone phosphate from L-rhamnose: step 2/3. Functionally, involved in the catabolism of L-rhamnose (6-deoxy-L-mannose). Catalyzes the transfer of the gamma-phosphate group from ATP to the 1-hydroxyl group of L-rhamnulose to yield L-rhamnulose 1-phosphate. This Salmonella schwarzengrund (strain CVM19633) protein is Rhamnulokinase.